The primary structure comprises 255 residues: Indole-3-glycerol phosphate synthase (255 aa).

It belongs to the TrpC family.

It catalyses the reaction 1-(2-carboxyphenylamino)-1-deoxy-D-ribulose 5-phosphate + H(+) = (1S,2R)-1-C-(indol-3-yl)glycerol 3-phosphate + CO2 + H2O. It participates in amino-acid biosynthesis; L-tryptophan biosynthesis; L-tryptophan from chorismate: step 4/5. This chain is Indole-3-glycerol phosphate synthase, found in Streptococcus pneumoniae (strain Hungary19A-6).